The following is a 587-amino-acid chain: Deoxynucleoside triphosphate triphosphohydrolase sahd-1 (587 aa).

Residues 92–262 enclose the HD domain; that stretch reads RFVHSLGTFS…GHDVDKMDYL (171 aa). The Zn(2+) site is built by His95, His134, Asp135, and Asp257. Residues 554–587 are disordered; that stretch reads EKFLTPRKRSPQDSPDEVSSSCSTAKRRLEFGSS. At Thr558 the chain carries Phosphothreonine.

This sequence belongs to the SAMHD1 family. As to quaternary structure, homodimer. Homotetramer; in dGTP-bound form. It depends on Zn(2+) as a cofactor.

It is found in the nucleus. Its subcellular location is the chromosome. It carries out the reaction a 2'-deoxyribonucleoside 5'-triphosphate + H2O = a 2'-deoxyribonucleoside + triphosphate + H(+). Its activity is regulated as follows. Allosterically activated and regulated by GTP or dGTP. Allosteric activation promotes the formation of highly active homotetramers. Phosphorylation impairs homotetramerization, thereby inhibiting dNTPase activity. Its function is as follows. Has deoxynucleoside triphosphate (dNTPase) activity. dNTPase activity acts as a regulator of DNA precursor pools by regulating dNTP pools. Phosphorylation acts as a switch to control dNTPase-dependent and -independent functions. The chain is Deoxynucleoside triphosphate triphosphohydrolase sahd-1 from Caenorhabditis elegans.